The chain runs to 186 residues: Large ribosomal subunit protein bL12c (186 aa).

Residues 1 to 11 (MASTLSTITLR) show a composition bias toward polar residues. The tract at residues 1–24 (MASTLSTITLRSPSPSTATSTHAS) is disordered. Residues 1 to 53 (MASTLSTITLRSPSPSTATSTHASIPFPKKTLEFPIRTPKLQNRRATFLRPLA) constitute a chloroplast transit peptide. Residues 12–24 (SPSPSTATSTHAS) show a composition bias toward low complexity.

Belongs to the bacterial ribosomal protein bL12 family.

The protein resides in the plastid. The protein localises to the chloroplast. The polypeptide is Large ribosomal subunit protein bL12c (Nicotiana sylvestris (Wood tobacco)).